The following is a 181-amino-acid chain: Ribulose bisphosphate carboxylase small subunit, chloroplastic 1 (181 aa).

The transit peptide at 1–57 (MASSIVSSAAAATRSNVAQASMVAPFTGLKSAASFPVTKKNNNVDITSLASNGGRVR) directs the protein to the chloroplast.

Belongs to the RuBisCO small chain family. (Microbial infection) Binds to tobamovirus movement protein; this interaction seems required for viral systemic movement. As to quaternary structure, heterohexadecamer of 8 large and 8 small subunits.

Its subcellular location is the plastid. The protein resides in the chloroplast. It localises to the cell junction. The protein localises to the plasmodesma. Its function is as follows. RuBisCO catalyzes two reactions: the carboxylation of D-ribulose 1,5-bisphosphate, the primary event in carbon dioxide fixation, as well as the oxidative fragmentation of the pentose substrate. Both reactions occur simultaneously and in competition at the same active site. Although the small subunit is not catalytic it is essential for maximal activity. Involved in antiviral defenses. This is Ribulose bisphosphate carboxylase small subunit, chloroplastic 1 from Solanum lycopersicum (Tomato).